The primary structure comprises 242 residues: Type III pantothenate kinase (242 aa).

7 to 14 (DLGNSRFK) provides a ligand contact to ATP. Residues tyrosine 91 and 98 to 101 (GVDR) contribute to the substrate site. Aspartate 100 (proton acceptor) is an active-site residue. Threonine 121 contributes to the ATP binding site. Threonine 171 is a binding site for substrate.

The protein belongs to the type III pantothenate kinase family. As to quaternary structure, homodimer. NH4(+) serves as cofactor. The cofactor is K(+).

It localises to the cytoplasm. The enzyme catalyses (R)-pantothenate + ATP = (R)-4'-phosphopantothenate + ADP + H(+). It participates in cofactor biosynthesis; coenzyme A biosynthesis; CoA from (R)-pantothenate: step 1/5. In terms of biological role, catalyzes the phosphorylation of pantothenate (Pan), the first step in CoA biosynthesis. This chain is Type III pantothenate kinase, found in Xanthomonas campestris pv. campestris (strain 8004).